Reading from the N-terminus, the 357-residue chain is tRNA/tmRNA (uracil-C(5))-methyltransferase (357 aa).

S-adenosyl-L-methionine is bound by residues Gln180, Tyr209, Asn214, Glu230, and Asp290. Cys315 serves as the catalytic Nucleophile. Glu349 serves as the catalytic Proton acceptor.

Belongs to the class I-like SAM-binding methyltransferase superfamily. RNA M5U methyltransferase family. TrmA subfamily.

It catalyses the reaction uridine(54) in tRNA + S-adenosyl-L-methionine = 5-methyluridine(54) in tRNA + S-adenosyl-L-homocysteine + H(+). It carries out the reaction uridine(341) in tmRNA + S-adenosyl-L-methionine = 5-methyluridine(341) in tmRNA + S-adenosyl-L-homocysteine + H(+). In terms of biological role, dual-specificity methyltransferase that catalyzes the formation of 5-methyluridine at position 54 (m5U54) in all tRNAs, and that of position 341 (m5U341) in tmRNA (transfer-mRNA). This chain is tRNA/tmRNA (uracil-C(5))-methyltransferase, found in Campylobacter jejuni (strain RM1221).